Here is a 217-residue protein sequence, read N- to C-terminus: Adenylate kinase (217 aa).

10–15 (GSGKGT) serves as a coordination point for ATP. The NMP stretch occupies residues 30–59 (STGDLLRAAVAAGSELGKQAKAAMDAGELV). Residues Thr31, Arg36, 57 to 59 (ELV), 85 to 88 (GFPR), and Gln92 contribute to the AMP site. Positions 126–164 (GRRTCQACGAIYNIYFSPPEVDHRCDKCNSDQLVQRSDD) are LID. An ATP-binding site is contributed by Arg127. Residues Cys130 and Cys133 each coordinate Zn(2+). 136 to 137 (IY) serves as a coordination point for ATP. Positions 150 and 153 each coordinate Zn(2+). AMP is bound by residues Arg161 and Arg172. Residue Asp200 participates in ATP binding.

Belongs to the adenylate kinase family. As to quaternary structure, monomer.

It is found in the cytoplasm. The enzyme catalyses AMP + ATP = 2 ADP. The protein operates within purine metabolism; AMP biosynthesis via salvage pathway; AMP from ADP: step 1/1. In terms of biological role, catalyzes the reversible transfer of the terminal phosphate group between ATP and AMP. Plays an important role in cellular energy homeostasis and in adenine nucleotide metabolism. The sequence is that of Adenylate kinase from Nitrosococcus oceani (strain ATCC 19707 / BCRC 17464 / JCM 30415 / NCIMB 11848 / C-107).